Reading from the N-terminus, the 120-residue chain is NAD(P)H-quinone oxidoreductase subunit 3, chloroplastic (120 aa).

3 consecutive transmembrane segments (helical) span residues 9–29 (IFWA…LISG), 64–84 (MFAL…PWAM), and 88–108 (VLGV…IVGS).

Belongs to the complex I subunit 3 family. NDH is composed of at least 16 different subunits, 5 of which are encoded in the nucleus.

Its subcellular location is the plastid. The protein localises to the chloroplast thylakoid membrane. The enzyme catalyses a plastoquinone + NADH + (n+1) H(+)(in) = a plastoquinol + NAD(+) + n H(+)(out). It catalyses the reaction a plastoquinone + NADPH + (n+1) H(+)(in) = a plastoquinol + NADP(+) + n H(+)(out). Its function is as follows. NDH shuttles electrons from NAD(P)H:plastoquinone, via FMN and iron-sulfur (Fe-S) centers, to quinones in the photosynthetic chain and possibly in a chloroplast respiratory chain. The immediate electron acceptor for the enzyme in this species is believed to be plastoquinone. Couples the redox reaction to proton translocation, and thus conserves the redox energy in a proton gradient. The protein is NAD(P)H-quinone oxidoreductase subunit 3, chloroplastic of Calycanthus floridus var. glaucus (Eastern sweetshrub).